Here is an 89-residue protein sequence, read N- to C-terminus: Endoribonuclease VapD 1 (89 aa).

The protein belongs to the VapD ribonuclease family. Homodimer.

Its function is as follows. Cleaves ssRNA, mostly between U:A. This is Endoribonuclease VapD 1 from Riemerella anatipestifer (Moraxella anatipestifer).